The primary structure comprises 1019 residues: Type VI secretion system spike protein VgrG2b (1019 aa).

The interval 268 to 291 (AGRPFTESRLRGHRRDARVASVSG) is disordered. Histidine 935 contacts Zn(2+). The active site involves glutamate 936. Zn(2+)-binding residues include histidine 939 and glutamate 983.

It belongs to the VgrG protein family. Interacts with Tla3; this interaction promotes Tle3 loading onto VgrG2b. Interacts with host gamma-tubulin ring complex components GCP1 and GCP4. The cofactor is Zn(2+).

Its subcellular location is the secreted. Functionally, part of the H2 type VI secretion system (H2-T6SS) specialized secretion system, which delivers several virulence factors in both prokaryotic and eukaryotic cells during infection. Forms the spike at the tip of the elongating tube probably formed by haemolysin co-regulated protein 2b/Hcp2b. Allows the delivery of the Tle3 antibacterial toxin to target cells where it exerts its toxicity. Additionally, acts directly as an effector and promotes internalization by interacting with the host gamma-tubulin ring complex. Elicits toxicity also in the bacterial periplasm and disrupts bacterial cell morphology. Toxicity is counteracted by a cognate immunity protein. This chain is Type VI secretion system spike protein VgrG2b (vgrG2b), found in Pseudomonas aeruginosa (strain ATCC 15692 / DSM 22644 / CIP 104116 / JCM 14847 / LMG 12228 / 1C / PRS 101 / PAO1).